The sequence spans 456 residues: GTPase Der (456 aa).

2 EngA-type G domains span residues 4–169 (PVVA…PSKD) and 178–353 (VQLA…DQSR). GTP contacts are provided by residues 10–17 (GRPNVGKS), 57–61 (DTGGL), 120–123 (NKCE), 184–191 (GRPNVGKS), 231–235 (DTAGI), and 296–299 (NKWD). The KH-like domain occupies 354-439 (RRVTTSVVNE…PIKLFWRGKQ (86 aa)).

The protein belongs to the TRAFAC class TrmE-Era-EngA-EngB-Septin-like GTPase superfamily. EngA (Der) GTPase family. In terms of assembly, associates with the 50S ribosomal subunit.

In terms of biological role, GTPase that plays an essential role in the late steps of ribosome biogenesis. The chain is GTPase Der from Prochlorococcus marinus (strain NATL2A).